Reading from the N-terminus, the 176-residue chain is MIDPGTVGAALETAVFGLLALVTVFFAIFVVIAKDVVRAGLALIMCMFGVAGLYILLNAQFLGVIQVLVYIGAIGVLILFAVMLTKREIGGGPVQINRPLAFLVCLLFVAVVVTGAFGTSWNTVSELPENPADPSNIEGIGMLIFTHFVAPFEVLSIVLLASLIGAIYMAKGEGNR.

The next 5 membrane-spanning stretches (helical) occupy residues 13 to 33 (TAVF…VVIA), 39 to 59 (AGLA…LLNA), 64 to 84 (VIQV…AVML), 99 to 119 (PLAF…AFGT), and 140 to 160 (IGML…IVLL).

It belongs to the complex I subunit 6 family. As to quaternary structure, the FPO complex is composed of at least 13 different subunits. FpoA, FpoH, FpoJ, FpoK, FpoL, FpoM and FpoN proteins constitute the membrane sector of the complex.

The protein localises to the cell membrane. It carries out the reaction methanophenazine + reduced coenzyme F420-(gamma-L-Glu)(n) = dihydromethanophenazine + oxidized coenzyme F420-(gamma-L-Glu)(n) + H(+). In terms of biological role, component of the F(420)H(2) dehydrogenase (FPO complex) which is part of the energy-conserving F(420)H(2):heterodisulfide oxidoreductase system. The membrane-bound electron transfer system of the complex plays an important role in the metabolism of methylotrophic methanogens when the organisms grow on methanol or methylamines. Catalyzes the oxidation of methanophenazine to dihydromethanophenazine. It shuttles electrons from F(420)H(2), via FAD and iron-sulfur (Fe-S) centers, to methanophenazine (an electron carrier in the membrane). It couples the redox reaction to proton translocation (for every two electrons transferred, two hydrogen ions are translocated across the cytoplasmic membrane), and thus conserves the redox energy in a proton gradient. It also catalyzes the oxidation of F(420)H(2) with quinones such as 2,3-dimethyl-1,4-naphthoquinone, 2-methyl-1,4-naphthoquinone and tetramethyl-p-benzoquinone. This chain is F(420)H(2) dehydrogenase subunit J (fpoJ), found in Methanosarcina mazei (strain ATCC BAA-159 / DSM 3647 / Goe1 / Go1 / JCM 11833 / OCM 88) (Methanosarcina frisia).